A 219-amino-acid polypeptide reads, in one-letter code: Small ribosomal subunit protein eS1 (219 aa).

It belongs to the eukaryotic ribosomal protein eS1 family. As to quaternary structure, component of the small ribosomal subunit. Mature ribosomes consist of a small (40S) and a large (60S) subunit. The 40S subunit contains about 33 different proteins and 1 molecule of RNA (18S). The 60S subunit contains about 49 different proteins and 3 molecules of RNA (25S, 5.8S and 5S).

Its subcellular location is the cytoplasm. The protein is Small ribosomal subunit protein eS1 of Guillardia theta (Cryptophyte).